We begin with the raw amino-acid sequence, 163 residues long: Nucleotide-binding protein DvMF_3058 (163 aa).

It belongs to the YajQ family.

Its function is as follows. Nucleotide-binding protein. The protein is Nucleotide-binding protein DvMF_3058 of Nitratidesulfovibrio vulgaris (strain DSM 19637 / Miyazaki F) (Desulfovibrio vulgaris).